A 215-amino-acid polypeptide reads, in one-letter code: 3-demethoxyubiquinol 3-hydroxylase (215 aa).

Residues glutamate 64, glutamate 94, histidine 97, glutamate 146, glutamate 178, and histidine 181 each coordinate Fe cation.

Belongs to the COQ7 family. The cofactor is Fe cation.

Its subcellular location is the cell membrane. It catalyses the reaction a 5-methoxy-2-methyl-3-(all-trans-polyprenyl)benzene-1,4-diol + AH2 + O2 = a 3-demethylubiquinol + A + H2O. Its pathway is cofactor biosynthesis; ubiquinone biosynthesis. In terms of biological role, catalyzes the hydroxylation of 2-nonaprenyl-3-methyl-6-methoxy-1,4-benzoquinol during ubiquinone biosynthesis. The protein is 3-demethoxyubiquinol 3-hydroxylase of Pseudomonas putida (strain GB-1).